The chain runs to 286 residues: Flagellin FlaB1 (286 aa).

The required for interaction with FliW stretch occupies residues 231–286; the sequence is LDIAAENLQAAESRIRDANIAKQMVEYTKNQVLTQSGTAMLAQANTSAQSILSILR.

This sequence belongs to the bacterial flagellin family. As to quaternary structure, the flagellum consists of an outer layer composed of repeating units of FlaA around a core that contains several antigenically related polypeptides. Interacts via its C-terminus with FliW; a synthetic peptide of residues 229-247 partially blocks binding to FliW.

The protein resides in the periplasmic flagellum. Its subcellular location is the periplasm. In terms of biological role, component of the core of the flagella. The polypeptide is Flagellin FlaB1 (flaB1) (Treponema pallidum (strain Nichols)).